A 535-amino-acid chain; its full sequence is Methylmalonate-semialdehyde/malonate-semialdehyde dehydrogenase [acylating], mitochondrial (535 aa).

The N-terminal 32 residues, 1–32 (MAAAVAAAAAMRSRILQVSSKVNATWYPASSF), are a transit peptide targeting the mitochondrion. N6-acetyllysine; alternate occurs at positions 47, 52, 55, and 76. N6-succinyllysine; alternate occurs at positions 47, 52, 55, and 76. K87 is subject to N6-acetyllysine. N6-acetyllysine; alternate is present on residues K117 and K129. Residues K117 and K129 each carry the N6-succinyllysine; alternate modification. The NAD(+) site is built by A183, F185, K209, E212, R213, and S262. S262 carries the post-translational modification Phosphoserine. K298 is modified (N6-acetyllysine). C317 functions as the Nucleophile in the catalytic mechanism. An N6-acetyllysine mark is found at K330 and K331. N6-acetyllysine; alternate is present on residues K364 and K376. N6-succinyllysine; alternate is present on residues K364 and K376. Phosphoserine is present on S380. K391 is subject to N6-succinyllysine. Residue E417 coordinates NAD(+). Residue K500 is modified to N6-acetyllysine. K517 carries the post-translational modification N6-succinyllysine.

Belongs to the aldehyde dehydrogenase family. As to quaternary structure, homotetramer. Acetylation of Lys-55; Lys-117 and Lys-331 is observed in liver mitochondria from fasted mice but not from fed mice.

The protein localises to the mitochondrion. The enzyme catalyses 3-oxopropanoate + NAD(+) + CoA + H2O = hydrogencarbonate + acetyl-CoA + NADH + H(+). The catalysed reaction is 2-methyl-3-oxopropanoate + NAD(+) + CoA + H2O = propanoyl-CoA + hydrogencarbonate + NADH + H(+). It carries out the reaction (R)-2-methyl-3-oxopropanoate + NAD(+) + CoA + H2O = propanoyl-CoA + hydrogencarbonate + NADH + H(+). It catalyses the reaction (S)-2-methyl-3-oxopropanoate + NAD(+) + CoA + H2O = propanoyl-CoA + hydrogencarbonate + NADH + H(+). Malonate and methylmalonate semialdehyde dehydrogenase involved in the catabolism of valine, thymine, and compounds catabolized by way of beta-alanine, including uracil and cytidine. This is Methylmalonate-semialdehyde/malonate-semialdehyde dehydrogenase [acylating], mitochondrial from Mus musculus (Mouse).